Reading from the N-terminus, the 147-residue chain is Large ribosomal subunit protein uL15 (147 aa).

The tract at residues 1-55 is disordered; that stretch reads MKLDNLAPQPGAKKRKRRVGRGIAAGQGASCGFGMRGQKSRSGRPTRPGFEGGQM. The span at 23 to 35 shows a compositional bias: gly residues; sequence IAAGQGASCGFGM.

This sequence belongs to the universal ribosomal protein uL15 family. Part of the 50S ribosomal subunit.

In terms of biological role, binds to the 23S rRNA. This is Large ribosomal subunit protein uL15 from Synechococcus elongatus (strain ATCC 33912 / PCC 7942 / FACHB-805) (Anacystis nidulans R2).